Consider the following 353-residue polypeptide: Chorismate synthase (353 aa).

Positions 48 and 54 each coordinate NADP(+). Residues 125–127 (RSS), 238–239 (NA), Gly278, 293–297 (KPTSS), and Arg319 contribute to the FMN site.

This sequence belongs to the chorismate synthase family. As to quaternary structure, homotetramer. The cofactor is FMNH2.

The catalysed reaction is 5-O-(1-carboxyvinyl)-3-phosphoshikimate = chorismate + phosphate. It functions in the pathway metabolic intermediate biosynthesis; chorismate biosynthesis; chorismate from D-erythrose 4-phosphate and phosphoenolpyruvate: step 7/7. Functionally, catalyzes the anti-1,4-elimination of the C-3 phosphate and the C-6 proR hydrogen from 5-enolpyruvylshikimate-3-phosphate (EPSP) to yield chorismate, which is the branch point compound that serves as the starting substrate for the three terminal pathways of aromatic amino acid biosynthesis. This reaction introduces a second double bond into the aromatic ring system. The protein is Chorismate synthase of Bordetella bronchiseptica (strain ATCC BAA-588 / NCTC 13252 / RB50) (Alcaligenes bronchisepticus).